Reading from the N-terminus, the 471-residue chain is Putative multidrug resistance protein MdtD (471 aa).

Residues 1 to 11 are Periplasmic-facing; it reads MTDLPDSTRWQ. The chain crosses the membrane as a helical span at residues 12 to 32; it reads LWIVAFGFFMQSLDTTIVNTA. Topologically, residues 33-48 are cytoplasmic; it reads LPSMAQSLGESPLHMH. A helical membrane pass occupies residues 49–69; sequence MVIVSYVLTVAVMLPASGWLA. At 70-76 the chain is on the periplasmic side; that stretch reads DKVGVRN. A helical membrane pass occupies residues 77 to 97; it reads IFFTAIVLFTLGSLFCALSGT. At 98–101 the chain is on the cytoplasmic side; that stretch reads LNEL. Residues 102-124 form a helical membrane-spanning segment; the sequence is LLARALQGVGGAMMVPVGRLTVM. Over 125–137 the chain is Periplasmic; sequence KIVPREQYMAAMT. The chain crosses the membrane as a helical span at residues 138 to 158; that stretch reads FVTLPGQVGPLLGPALGGLLV. Topologically, residues 159–164 are cytoplasmic; it reads EYASWH. A helical transmembrane segment spans residues 165-185; that stretch reads WIFLINIPVGIIGAIATLLLM. Topologically, residues 186 to 196 are periplasmic; sequence PNYTMQTRRFD. Residues 197 to 217 form a helical membrane-spanning segment; it reads LSGFLLLAVGMAVLTLALDGS. Residues 218–224 lie on the Cytoplasmic side of the membrane; it reads KGTGLSP. The chain crosses the membrane as a helical span at residues 225 to 245; the sequence is LTIAGLVAVGVVALVLYLLHA. Over 246 to 262 the chain is Periplasmic; the sequence is RNNNRALFSLKLFRTRT. Residues 263–283 traverse the membrane as a helical segment; sequence FSLGLAGSFAGRIGSGMLPFM. The Cytoplasmic portion of the chain corresponds to 284 to 285; the sequence is TP. Residues 286–306 traverse the membrane as a helical segment; the sequence is VFLQIGLGFSPFHAGLMMIPM. The Periplasmic portion of the chain corresponds to 307–341; the sequence is VLGSMGMKRIVVQVVNRFGYRRVLVATTLGLSLVT. Residues 342–362 form a helical membrane-spanning segment; it reads LLFMTTALLGWYYVLPFVLFL. Residues 363–395 lie on the Cytoplasmic side of the membrane; sequence QGMVNSTRFSSMNTLTLKDLPDNLASSGNSLLS. Residues 396–416 traverse the membrane as a helical segment; the sequence is MIMQLSMSIGVTIAGLLLGLF. The Periplasmic portion of the chain corresponds to 417–430; the sequence is GSQHVSVDSGTTQT. A helical transmembrane segment spans residues 431-451; that stretch reads VFMYTWLSMALIIALPAFIFA. The Cytoplasmic portion of the chain corresponds to 452 to 471; the sequence is RVPNDTHQNVAISRRKRSAQ.

Belongs to the major facilitator superfamily. TCR/Tet family.

It is found in the cell inner membrane. The polypeptide is Putative multidrug resistance protein MdtD (Escherichia coli (strain K12 / MC4100 / BW2952)).